The following is a 545-amino-acid chain: Cytochrome P450 10 (545 aa).

A heme-binding site is contributed by Cys493.

This sequence belongs to the cytochrome P450 family. Requires heme as cofactor. In terms of tissue distribution, abundantly expressed in the female gonadotropic hormone producing dorsal bodies.

In terms of biological role, may be involved in the synthesis of the female gonadotropic hormone produced by the dorsal bodies. In Lymnaea stagnalis (Great pond snail), this protein is Cytochrome P450 10 (CYP10).